A 389-amino-acid chain; its full sequence is Xylose isomerase (389 aa).

Residues histidine 101 and aspartate 104 contribute to the active site. Glutamate 232, glutamate 268, histidine 271, aspartate 296, aspartate 307, and aspartate 309 together coordinate Mg(2+).

The protein belongs to the xylose isomerase family. As to quaternary structure, homotetramer. Mg(2+) serves as cofactor.

It is found in the cytoplasm. It catalyses the reaction alpha-D-xylose = alpha-D-xylulofuranose. This Lactococcus lactis subsp. cremoris (strain SK11) protein is Xylose isomerase.